Consider the following 150-residue polypeptide: UPF0179 protein Mbur_1033 (150 aa).

It belongs to the UPF0179 family.

This is UPF0179 protein Mbur_1033 from Methanococcoides burtonii (strain DSM 6242 / NBRC 107633 / OCM 468 / ACE-M).